The sequence spans 306 residues: Curved DNA-binding protein (306 aa).

A J domain is found at 5-69 (DYYAIMGVKP…QRRAEYDQMW (65 aa)).

The protein resides in the cytoplasm. It is found in the nucleoid. In terms of biological role, DNA-binding protein that preferentially recognizes a curved DNA sequence. It is probably a functional analog of DnaJ; displays overlapping activities with DnaJ, but functions under different conditions, probably acting as a molecular chaperone in an adaptive response to environmental stresses other than heat shock. Lacks autonomous chaperone activity; binds native substrates and targets them for recognition by DnaK. Its activity is inhibited by the binding of CbpM. This is Curved DNA-binding protein from Shigella sonnei (strain Ss046).